Consider the following 311-residue polypeptide: Meiotically up-regulated gene 146 protein (311 aa).

Its subcellular location is the cytoplasm. The protein resides in the nucleus. Has a role in sporulation. This Schizosaccharomyces pombe (strain 972 / ATCC 24843) (Fission yeast) protein is Meiotically up-regulated gene 146 protein (mug146).